A 429-amino-acid chain; its full sequence is Adenylosuccinate synthetase (429 aa).

GTP-binding positions include 15 to 21 (GDEGKGK) and 43 to 45 (GHV). Residue Asp16 is the Proton acceptor of the active site. Asp16 and Gly43 together coordinate Mg(2+). IMP-binding positions include 16–19 (DEGK), 41–44 (NAGH), Thr131, Arg145, Gln225, Thr240, and Arg304. The Proton donor role is filled by His44. 300–306 (SNTKRPR) contributes to the substrate binding site. GTP-binding positions include Arg306, 332-334 (LLD), and 414-416 (SVG).

It belongs to the adenylosuccinate synthetase family. In terms of assembly, homodimer. Mg(2+) is required as a cofactor.

The protein localises to the cytoplasm. It catalyses the reaction IMP + L-aspartate + GTP = N(6)-(1,2-dicarboxyethyl)-AMP + GDP + phosphate + 2 H(+). It participates in purine metabolism; AMP biosynthesis via de novo pathway; AMP from IMP: step 1/2. In terms of biological role, plays an important role in the de novo pathway of purine nucleotide biosynthesis. Catalyzes the first committed step in the biosynthesis of AMP from IMP. This is Adenylosuccinate synthetase from Mesoplasma florum (strain ATCC 33453 / NBRC 100688 / NCTC 11704 / L1) (Acholeplasma florum).